The sequence spans 502 residues: Probable cytosol aminopeptidase (502 aa).

2 residues coordinate Mn(2+): K275 and D280. The active site involves K287. Mn(2+) contacts are provided by D298, D357, and E359. R361 is an active-site residue.

It belongs to the peptidase M17 family. It depends on Mn(2+) as a cofactor.

Its subcellular location is the cytoplasm. The catalysed reaction is Release of an N-terminal amino acid, Xaa-|-Yaa-, in which Xaa is preferably Leu, but may be other amino acids including Pro although not Arg or Lys, and Yaa may be Pro. Amino acid amides and methyl esters are also readily hydrolyzed, but rates on arylamides are exceedingly low.. It carries out the reaction Release of an N-terminal amino acid, preferentially leucine, but not glutamic or aspartic acids.. In terms of biological role, presumably involved in the processing and regular turnover of intracellular proteins. Catalyzes the removal of unsubstituted N-terminal amino acids from various peptides. The protein is Probable cytosol aminopeptidase of Ralstonia pickettii (strain 12J).